Here is a 1755-residue protein sequence, read N- to C-terminus: MESQQLSNYPHISHGSACASVTSKEVHTNQDPLDVSASKIQEYDKASTKANSQQTTTPASSAVPENPHHASPQPASVPPPQNGPYPQQCMMTQNQANPSGWSFYGHPSMIPYTPYQMSPMYFPPGPQSQFPQYPSSVGTPLSTPSPESGNTFTDSSSADSDMTSTKKYVRPPPMLTSPNDFPNWVKTYIKFLQNSNLGGIIPTVNGKPVRQITDDELTFLYNTFQIFAPSQFLPTWVKDILSVDYTDIMKILSKSIEKMQSDTQEANDIVTLANLQYNGSTPADAFETKVTNIIDRLNNNGIHINNKVACQLIMRGLSGEYKFLRYTRHRHLNMTVAELFLDIHAIYEEQQGSRNSKPNYRRNPSDEKNDSRSYTNTTKPKVIARNPQKTNNSKSKTARAHNVSTSNNSPSTDNDSISKSTTEPIQLNNKHDLHLGQKLTESTVNHTNHSDDELPGHLLLDSGASRTLIRSAHHIHSASSNPDINVVDAQKRNIPINAIGDLQFHFQDNTKTSIKVLHTPNIAYDLLSLNELAAVDITACFTKNVLERSDGTVLAPIVKYGDFYWVSKKYLLPSNISVPTINNVHTSESTRKYPYPFIHRMLAHANAQTIRYSLKNNTITYFNESDVDWSSAIDYQCPDCLIGKSTKHRHIKGSRLKYQNSYEPFQYLHTDIFGPVHNLPKSAPSYFISFTDETTKFRWVYPLHDRREDSILDVFTTILAFIKNQFQASVLVIQMDRGSEYTNRTLHKFLEKNGITPCYTTTADSRAHGVAERLNRTLLDDCRTQLQCSGLPNHLWFSAIEFSTIVRNSLASPKSKKSARQHAGLAGLDISTLLPFGQPVIVNDHNPNSKIHPRGIPGYALHPSRNSYGYIIYLPSLKKTVDTTNYVILQGKESRLDQFNYDALTFDEDLNRLTASYHSFIASNEIQESNDLNIESDHDFQSDIELHPEQPRNVLSKAVSPTDSTPPSTHTEDSKRVSKTNIRAPREVDPNISESNILPSKKRSSTPQISNIESTGSGGMHKLNVPLLAPMSQSNTHESSYASKSKDFRHSDSYSDNETNHTNVPISSTGGTNNKTVPQTSEQETEKRIIHRSPSIDTSSSESNSLHHVVPIKTSDTCPKENTEESIIADLPLPDLPPEPPTELSDSFKELPPINSRQTNSSLGGIGDSNAYTTINSKKRSLEDNETEIKVSRDTWNTKNMRSLEPPRSKKRIHLIAAVKAVKSIKPIRTTLRYDEAITYNKDIKEKEKYIEAYHKEVNQLLKMNTWDTDKYYDRKEIDPKRVINSMFIFNRKRDGTHKARFVARGDIQHPDTYDSGMQSNTVHHYALMTSLSLALDNNYYITQLDISSAYLYADIKEELYIRPPPHLGMNDKLIRLKKSLYGLKQSGANWYETIKSYLIKQCGMEEVRGWSCVFKNSQVTICLFVDDMILFSKDLNSNKRIIAKLKMQYDTKIINLGESDDEIQYDILGLEIKYQRGKYMKLGMENSLTEKIPKLNVPLNPNGRKLGAPGQPGLYINQQELELEEDDYKMKVHEMQKLIGLASYVGYKFRFDLLYYINTLAQHILFPSKQVLDMTYELIQFIWNTRDKQLIWHKSKPVKPTNKLVVISDASYGNQPYYKSQIGNIYLLNGKVIGGKSTKASLTCTSTTEAEIHAISESVPLLNNLSYLIQELDKKPITKGLLTDSKSTISIIISNNEEKFRNRFFGTKAMRLRDEVSGNHLHVCYIETKKNIADVMTKPLPIKTFKLLTNKWIH.

Polar residues-rich tracts occupy residues 1–10 (MESQQLSNYP), 48–60 (TKANSQQTTTPAS), and 127–152 (QSQFPQYPSSVGTPLSTPSPESGNTF). Disordered stretches follow at residues 1–93 (MESQ…MMTQ), 126–173 (PQSQ…RPPP), and 352–421 (GSRN…SKST). The span at 153-165 (TDSSSADSDMTST) shows a compositional bias: low complexity. An RNA-binding region spans residues 299-401 (NNGIHINNKV…NSKSKTARAH (103 aa)). A compositionally biased stretch (low complexity) spans 402–418 (NVSTSNNSPSTDNDSIS). A Phosphoserine modification is found at Ser416. The For protease activity; shared with dimeric partner role is filled by Asp461. An integrase-type zinc finger-like region spans residues 583 to 640 (NVHTSESTRKYPYPFIHRMLAHANAQTIRYSLKNNTITYFNESDVDWSSAIDYQCPDC). Residues 660-835 (NSYEPFQYLH…AGLDISTLLP (176 aa)) enclose the Integrase catalytic domain. Positions 671 and 736 each coordinate Mg(2+). Residues 956–1172 (SKAVSPTDST…LGGIGDSNAY (217 aa)) are disordered. A compositionally biased stretch (low complexity) spans 960-969 (SPTDSTPPST). Polar residues-rich tracts occupy residues 1005–1015 (STPQISNIEST) and 1031–1043 (MSQSNTHESSYAS). Over residues 1044–1053 (KSKDFRHSDS) the composition is skewed to basic and acidic residues. Polar residues-rich tracts occupy residues 1054–1082 (YSDNETNHTNVPISSTGGTNNKTVPQTSE) and 1095–1106 (SIDTSSSESNSL). A Bipartite nuclear localization signal motif is present at residues 1178-1212 (KKRSLEDNETEIKVSRDTWNTKNMRSLEPPRSKKR). Residues 1338 to 1476 (NNYYITQLDI…DILGLEIKYQ (139 aa)) form the Reverse transcriptase Ty1/copia-type domain. Positions 1346, 1427, 1428, 1610, 1652, and 1685 each coordinate Mg(2+). The region spanning 1610-1752 (DASYGNQPYY…IKTFKLLTNK (143 aa)) is the RNase H Ty1/copia-type domain.

The capsid protein forms a homotrimer, from which the VLPs are assembled. The protease is a homodimer, whose active site consists of two apposed aspartic acid residues. Post-translationally, initially, virus-like particles (VLPs) are composed of the structural unprocessed proteins Gag and Gag-Pol, and also contain the host initiator methionine tRNA (tRNA(i)-Met) which serves as a primer for minus-strand DNA synthesis, and a dimer of genomic Ty RNA. Processing of the polyproteins occurs within the particle and proceeds by an ordered pathway, called maturation. First, the protease (PR) is released by autocatalytic cleavage of the Gag-Pol polyprotein yielding capsid protein p45 and a Pol-p154 precursor protein. This cleavage is a prerequisite for subsequent processing of Pol-p154 at the remaining sites to release the mature structural and catalytic proteins. Maturation takes place prior to the RT reaction and is required to produce transposition-competent VLPs.

Its subcellular location is the cytoplasm. The protein localises to the nucleus. The catalysed reaction is DNA(n) + a 2'-deoxyribonucleoside 5'-triphosphate = DNA(n+1) + diphosphate. The enzyme catalyses Endonucleolytic cleavage to 5'-phosphomonoester.. Its function is as follows. Capsid protein (CA) is the structural component of the virus-like particle (VLP), forming the shell that encapsulates the retrotransposons dimeric RNA genome. The particles are assembled from trimer-clustered units and there are holes in the capsid shells that allow for the diffusion of macromolecules. CA also has nucleocapsid-like chaperone activity, promoting primer tRNA(i)-Met annealing to the multipartite primer-binding site (PBS), dimerization of Ty1 RNA and initiation of reverse transcription. In terms of biological role, the aspartyl protease (PR) mediates the proteolytic cleavages of the Gag and Gag-Pol polyproteins after assembly of the VLP. Functionally, reverse transcriptase/ribonuclease H (RT) is a multifunctional enzyme that catalyzes the conversion of the retro-elements RNA genome into dsDNA within the VLP. The enzyme displays a DNA polymerase activity that can copy either DNA or RNA templates, and a ribonuclease H (RNase H) activity that cleaves the RNA strand of RNA-DNA heteroduplexes during plus-strand synthesis and hydrolyzes RNA primers. The conversion leads to a linear dsDNA copy of the retrotransposon that includes long terminal repeats (LTRs) at both ends. Integrase (IN) targets the VLP to the nucleus, where a subparticle preintegration complex (PIC) containing at least integrase and the newly synthesized dsDNA copy of the retrotransposon must transit the nuclear membrane. Once in the nucleus, integrase performs the integration of the dsDNA into the host genome. The protein is Transposon Ty1-GR3 Gag-Pol polyprotein (TY1B-GR3) of Saccharomyces cerevisiae (strain ATCC 204508 / S288c) (Baker's yeast).